A 268-amino-acid chain; its full sequence is 3-deoxy-manno-octulosonate cytidylyltransferase (268 aa).

This sequence belongs to the KdsB family.

It is found in the cytoplasm. It carries out the reaction 3-deoxy-alpha-D-manno-oct-2-ulosonate + CTP = CMP-3-deoxy-beta-D-manno-octulosonate + diphosphate. Its pathway is nucleotide-sugar biosynthesis; CMP-3-deoxy-D-manno-octulosonate biosynthesis; CMP-3-deoxy-D-manno-octulosonate from 3-deoxy-D-manno-octulosonate and CTP: step 1/1. It functions in the pathway bacterial outer membrane biogenesis; lipopolysaccharide biosynthesis. In terms of biological role, activates KDO (a required 8-carbon sugar) for incorporation into bacterial lipopolysaccharide in Gram-negative bacteria. This Ralstonia pickettii (strain 12J) protein is 3-deoxy-manno-octulosonate cytidylyltransferase.